Reading from the N-terminus, the 319-residue chain is Aspartate carbamoyltransferase catalytic subunit (319 aa).

2 residues coordinate carbamoyl phosphate: arginine 64 and threonine 65. Residue lysine 92 participates in L-aspartate binding. Positions 114, 142, and 145 each coordinate carbamoyl phosphate. L-aspartate-binding residues include arginine 175 and arginine 229. Residues glycine 270 and proline 271 each coordinate carbamoyl phosphate.

The protein belongs to the aspartate/ornithine carbamoyltransferase superfamily. ATCase family. In terms of assembly, heterododecamer (2C3:3R2) of six catalytic PyrB chains organized as two trimers (C3), and six regulatory PyrI chains organized as three dimers (R2).

The catalysed reaction is carbamoyl phosphate + L-aspartate = N-carbamoyl-L-aspartate + phosphate + H(+). It functions in the pathway pyrimidine metabolism; UMP biosynthesis via de novo pathway; (S)-dihydroorotate from bicarbonate: step 2/3. Functionally, catalyzes the condensation of carbamoyl phosphate and aspartate to form carbamoyl aspartate and inorganic phosphate, the committed step in the de novo pyrimidine nucleotide biosynthesis pathway. This is Aspartate carbamoyltransferase catalytic subunit from Rhodospirillum rubrum (strain ATCC 11170 / ATH 1.1.1 / DSM 467 / LMG 4362 / NCIMB 8255 / S1).